A 295-amino-acid polypeptide reads, in one-letter code: Probable protein phosphatase 2C 6 (295 aa).

The PPM-type phosphatase domain occupies 23-294 (QYAATHMQGW…DNMTCILIQF (272 aa)). Mn(2+) is bound by residues aspartate 57, glycine 58, aspartate 237, and aspartate 285.

The protein belongs to the PP2C family. The cofactor is Mg(2+). Requires Mn(2+) as cofactor.

The protein resides in the membrane. The enzyme catalyses O-phospho-L-seryl-[protein] + H2O = L-seryl-[protein] + phosphate. It catalyses the reaction O-phospho-L-threonyl-[protein] + H2O = L-threonyl-[protein] + phosphate. Its function is as follows. Enzyme with a broad specificity. This Paramecium tetraurelia protein is Probable protein phosphatase 2C 6.